We begin with the raw amino-acid sequence, 82 residues long: Small ribosomal subunit protein bS16 (82 aa).

The protein belongs to the bacterial ribosomal protein bS16 family.

The sequence is that of Small ribosomal subunit protein bS16 from Salmonella agona (strain SL483).